We begin with the raw amino-acid sequence, 493 residues long: MSELTSLTIAEAREKLRAKEITAIELTEAYISAIDAANERLNAYVKVTPDLARVMARKSDERIAAGTAGELEGIPLGIKDLFATVGVHTQACSHILDGFEPRYESTVTQNLWDDGAVMLGKLNMDEFAMGSSNETSYYGPVINPWRAEGSNQQLVPGGSSGGSAAAVAAHLCAGATATDTGGSIRQPAAFTGTVGIKPTYGRCSRWGTVAFASSLDQAGPIARDVRDAAILLKSMASVDAKDTTSVDLPVPDYEAVLGQSLKGMKIGIPNEYRVDGMPEEIETLWRQGIAWLKDAGADIVDISLPHTKYALPAYYIVAPAEASSNLARYDGVRYGLRVDGKDIVDMYEKTRAAGFGKEVKRRIMIGTYVLSAGYYDAYYIRAQKVRTLIKRDFELAFDAGVDAILTPATPSSAFGVADENLAADPVKMYLNDIFTVTVNMAGLPGIAVPAGLDQKGLPLGLQLIGKAFDEETLFKTAYVIEQAAGKFTPAKWW.

Active-site charge relay system residues include lysine 79 and serine 159. Serine 183 serves as the catalytic Acyl-ester intermediate.

Belongs to the amidase family. GatA subfamily. Heterotrimer of A, B and C subunits.

It catalyses the reaction L-glutamyl-tRNA(Gln) + L-glutamine + ATP + H2O = L-glutaminyl-tRNA(Gln) + L-glutamate + ADP + phosphate + H(+). In terms of biological role, allows the formation of correctly charged Gln-tRNA(Gln) through the transamidation of misacylated Glu-tRNA(Gln) in organisms which lack glutaminyl-tRNA synthetase. The reaction takes place in the presence of glutamine and ATP through an activated gamma-phospho-Glu-tRNA(Gln). The polypeptide is Glutamyl-tRNA(Gln) amidotransferase subunit A (Rhizobium etli (strain ATCC 51251 / DSM 11541 / JCM 21823 / NBRC 15573 / CFN 42)).